Reading from the N-terminus, the 138-residue chain is Mini-ribonuclease 3 (138 aa).

Residue D33 is part of the active site.

The protein belongs to the MrnC RNase family. In terms of assembly, homodimer. It depends on Mg(2+) as a cofactor.

It localises to the cytoplasm. Its function is as follows. Involved in correct processing of both the 5' and 3' ends of 23S rRNA precursor. Processes 30S rRNA precursor transcript even in absence of ribonuclease 3 (Rnc); Rnc processes 30S rRNA into smaller rRNA precursors. The sequence is that of Mini-ribonuclease 3 from Synechococcus sp. (strain ATCC 27144 / PCC 6301 / SAUG 1402/1) (Anacystis nidulans).